Reading from the N-terminus, the 720-residue chain is MAETLQKRHEQIMRKFDRAHSPQEAVREKCLEATRFARVPGGQWEGATAAGSELGKHFEKYPKFEINKISTELNRIISEYRHNRITVKFRPGDKTASEALANKLNGLFRADYEETDGGEACDNAFDDGSTGGFGCFRLTTNLVNALDPMDERQRICLEPIYDPARSVWFDPDAKKYDKSDAEWAFCMYSLSAEKYKAEYNKDPATLMSGIERSWDYDWYDVDVVYIAKYYEVKKESVDVVSFQNPLTSETVTYDSDQLELVEDELADIGFIEAARRTIKRRRVYVSVVDGEGFLEKAQRIPGEHIPLIPVYGKRWFIDDIERVEGHIAKAMDAQRLYNLQVSMLADSATQDTGSIPIVGKSQIKTLEKYWANRNKNRPAFLPLNEIVDKQGNIIAPPTPVGYTQPQPLNQAMAALLQQTGADIQEVTGSSQAMQPMPSNIAKETVNHLMHRSDMSSFIYLDNMAKSLKRAGEVWLSMAREVYGSDRQVRIVNADGTDDIALMSVVINDNQTGQVVAMNDLSSGRYDVTVDVGPSYTARRDATVSVLTNLLAGMLPQDPMRQVLQGIILDNMEGEGLDEFKEYNRKQLLTQGVVKPRNTEEEQMVAQMIQQAQQPNAELVAAQGVLMQGQAEVQKAKNEELAIQVKAFQAQTEARVAEAKMVQILASADSAKRAEIREALKMLHQFQKEQGDASRADAELILKATDTQHKQNRDAAKNHSI.

This sequence belongs to the p22likevirus portal protein family. As to quaternary structure, homododecamer.

The protein localises to the virion. Its function is as follows. Forms the portal vertex of the capsid. This portal plays critical roles in head assembly, genome packaging, neck/tail attachment, and genome ejection. Procapsid assembly may initiate with a nucleation complex composed of portal and scaffolding proteins. The portal protein multimerizes as a single ring-shaped homododecamer arranged around a central channel. This Acyrthosiphon pisum secondary endosymbiont phage 1 (Bacteriophage APSE-1) protein is Portal protein (19).